The primary structure comprises 562 residues: Wee1-like protein kinase 2 (562 aa).

Disordered stretches follow at residues 1-86 (MRTA…DKGV) and 161-181 (YRQANFHPNGKRKERPEDDCS). A compositionally biased stretch (polar residues) spans 35–48 (HSNQRGSPVNSWRA). Positions 217–491 (FLEIEKIGAG…AKNSLLRRCV (275 aa)) constitute a Protein kinase domain. ATP contacts are provided by residues 223–231 (IGAGEFGSV) and Lys246. The active-site Proton acceptor is the Asp344. Mg(2+)-binding residues include Asn349 and Asp381. A coiled-coil region spans residues 494–520 (AAQLQKQLNVEKFKTAMLERELKAAKL).

This sequence belongs to the protein kinase superfamily. Ser/Thr protein kinase family. WEE1 subfamily.

Its subcellular location is the nucleus. It catalyses the reaction L-tyrosyl-[protein] + ATP = O-phospho-L-tyrosyl-[protein] + ADP + H(+). Oocyte-specific protein tyrosine kinase that phosphorylates and inhibits cdk1 and acts as a regulator of meiosis. Required to maintain meiotic arrest in oocytes by phosphorylating cdk1 at 'Tyr-15', leading to inhibit cdk1 activity and prevent meiotic reentry. The sequence is that of Wee1-like protein kinase 2 (wee2) from Xenopus tropicalis (Western clawed frog).